Reading from the N-terminus, the 2021-residue chain is Fanconi anemia group M protein homolog (2021 aa).

A Phosphoserine modification is found at Ser30. The region spanning 86–254 (ISRSALFCNT…QVITNLLIGK (169 aa)) is the Helicase ATP-binding domain. 99 to 106 (LPTGLGKT) is a binding site for ATP. The short motif at 202–205 (DEAH) is the DEAH box element. Positions 437-612 (KLEEVILEHF…VLRLYQGSPR (176 aa)) constitute a Helicase C-terminal domain. 9 disordered regions span residues 638–657 (RSVQ…SKSN), 837–886 (PCRA…RMAD), 1002–1049 (CSPY…LPGT), 1244–1273 (GAAD…AISP), 1296–1319 (ASSS…SSKT), 1369–1441 (PRRT…RTCP), 1447–1466 (KGRN…RSQV), 1615–1700 (NKKQ…QPSI), and 1712–1732 (AQSH…ESRK). Over residues 1018 to 1035 (ASHSAGNSQQNLESNSAK) the composition is skewed to polar residues. Over residues 1249-1259 (SGRHSDKEIKD) the composition is skewed to basic and acidic residues. The segment covering 1370–1379 (RRTEVEHLTS) has biased composition (basic and acidic residues). A compositionally biased stretch (basic residues) spans 1388-1397 (RKTKKPKRNV). Ser1637 bears the Phosphoserine mark. Over residues 1669 to 1682 (SGPSGSSVPPQVLS) the composition is skewed to low complexity. Residues 1684-1700 (PSWNQSSRQRLQVQPSI) show a composition bias toward polar residues. An interaction with FAAP24 region spans residues 1689–2009 (SSRQRLQVQP…LNQERQKPDT (321 aa)).

Belongs to the DEAD box helicase family. DEAH subfamily. FANCM sub-subfamily. As to quaternary structure, component of the Fanconi anemia (FA) core complex, which consists of CENPS, CENPX, FANCA, FANCB, FANCC, FANCE, FANCF, FANCG, FANCL, FANCM, FAAP24 and FAAP100. The FA core complex associates with Bloom syndrome (BLM) complex, which consists of at least BLM, DNA topoisomerase 3-alpha/TOP3A, RMI1/BLAP75, RPA1/RPA70 and RPA2/RPA32. This supercomplex between FA and BLM complexes has been called BRAFT. Forms a discrete complex with CENPS and CENPX, called FANCM-MHF; this interaction stimulates DNA binding and replication fork remodeling by FANCM and stabilizes the binding partners. Forms a heterodimer with FAAP24; this interaction increases FANCM single-stranded DNA-binding activity. Phosphorylated; hyperphosphorylated in response to genotoxic stress.

It localises to the nucleus. The catalysed reaction is ATP + H2O = ADP + phosphate + H(+). In terms of biological role, DNA-dependent ATPase component of the Fanconi anemia (FA) core complex. Required for the normal activation of the FA pathway, leading to monoubiquitination of the FANCI-FANCD2 complex in response to DNA damage, cellular resistance to DNA cross-linking drugs, and prevention of chromosomal breakage. In complex with CENPS and CENPX, binds double-stranded DNA (dsDNA), fork-structured DNA (fsDNA) and Holliday junction substrates. Its ATP-dependent DNA branch migration activity can process branched DNA structures such as a movable replication fork. This activity is strongly stimulated in the presence of CENPS and CENPX. In complex with FAAP24, efficiently binds to single-strand DNA (ssDNA), splayed-arm DNA, and 3'-flap substrates. In vitro, on its own, strongly binds ssDNA oligomers and weakly fsDNA, but does not bind to dsDNA. This is Fanconi anemia group M protein homolog (Fancm) from Mus musculus (Mouse).